The primary structure comprises 178 residues: Interleukin-10 (178 aa).

The first 18 residues, 1–18, serve as a signal peptide directing secretion; sequence MHSSALLCCLVLLTGVRA. Disulfide bonds link Cys-30–Cys-126 and Cys-80–Cys-132. The N-linked (GlcNAc...) asparagine glycan is linked to Asn-134.

The protein belongs to the IL-10 family. Homodimer. Interacts with IL10RA and IL10RB. As to expression, produced by a variety of cell lines, including T-cells, macrophages, mast cells and other cell types.

The protein resides in the secreted. Functionally, major immune regulatory cytokine that acts on many cells of the immune system where it has profound anti-inflammatory functions, limiting excessive tissue disruption caused by inflammation. Mechanistically, IL10 binds to its heterotetrameric receptor comprising IL10RA and IL10RB leading to JAK1 and STAT2-mediated phosphorylation of STAT3. In turn, STAT3 translocates to the nucleus where it drives expression of anti-inflammatory mediators. Targets antigen-presenting cells (APCs) such as macrophages and monocytes and inhibits their release of pro-inflammatory cytokines including granulocyte-macrophage colony-stimulating factor /GM-CSF, granulocyte colony-stimulating factor/G-CSF, IL-1 alpha, IL-1 beta, IL-6, IL-8 and TNF-alpha. Also interferes with antigen presentation by reducing the expression of MHC-class II and co-stimulatory molecules, thereby inhibiting their ability to induce T cell activation. In addition, controls the inflammatory response of macrophages by reprogramming essential metabolic pathways including mTOR signaling. The polypeptide is Interleukin-10 (IL10) (Homo sapiens (Human)).